Consider the following 60-residue polypeptide: Insect toxin mu-NPTX-Nc1a (60 aa).

The signal sequence occupies residues 1-19; it reads MIYQVVLLLLVSPAPVSAA.

Post-translationally, contains 4 disulfide bonds. As to expression, expressed by the venom gland.

It localises to the secreted. Its function is as follows. Insect-specific toxin. Blocks voltage-gated potassium and sodium channels. The polypeptide is Insect toxin mu-NPTX-Nc1a (Trichonephila clavata (Joro spider)).